Reading from the N-terminus, the 566-residue chain is Putative pentatricopeptide repeat-containing protein At1g28020 (566 aa).

PPR repeat units follow at residues 136-171 (GDSVYTSLLNSYARSDKTLCKAEATFQKMRDLGLLL), 172-206 (RPVPYNAMMSLYSALKNREKVEELLLEMKDNDVEA), 207-242 (DNVTVNNVLKLYSAVCDVTEMEKFLNKWEGIHGIKL), 243-273 (EWHTTLDMAKAYLRARSSGKAMKMLRLTEQL), 279-309 (LKSAYDHLMKLYGEAGNREEVLRVWKLYKSK), 314-348 (DNNGYRTVIRSLLKVDDIVGAEEIYKVWESLPLEF), 349-385 (DHRIPTMLASGYRDRGMTEKAEKLMNSKTIKDRRMNK), 468-504 (DYSVYVALLSSYAKSDKNLGNMVDEILREMEENNVDP), and 505-540 (DLITVNHVLKVYAAESKIQAMEMFMRRWGTEDGIKL).

The protein belongs to the PPR family. P subfamily.

The sequence is that of Putative pentatricopeptide repeat-containing protein At1g28020 from Arabidopsis thaliana (Mouse-ear cress).